The chain runs to 972 residues: DNA topoisomerase 1 (972 aa).

2 disordered regions span residues methionine 1–lysine 210 and histidine 300–alanine 416. Polar residues predominate over residues isoleucine 11–glycine 31. A compositionally biased stretch (basic residues) spans histidine 32–serine 50. Basic and acidic residues-rich tracts occupy residues serine 51–serine 65, serine 72–lysine 86, and lysine 93–glycine 103. Positions serine 104 to serine 114 are enriched in low complexity. Positions serine 125–serine 138 are enriched in basic residues. Residues lysine 139–glycine 151 are compositionally biased toward basic and acidic residues. Low complexity predominate over residues serine 173–serine 183. Serine 303 is modified (phosphoserine). At tyrosine 304 the chain carries Phosphotyrosine. The span at histidine 316–valine 330 shows a compositional bias: acidic residues. Interaction with DNA stretches follow at residues lysine 648–tyrosine 649, arginine 711–lysine 716, and threonine 807–lysine 809. Residues serine 655–phenylalanine 972 form the Topo IB-type catalytic domain. The O-(3'-phospho-DNA)-tyrosine intermediate role is filled by tyrosine 930.

It belongs to the type IB topoisomerase family. As to quaternary structure, interacts with Topors.

It localises to the nucleus. It is found in the cytoplasm. It catalyses the reaction ATP-independent breakage of single-stranded DNA, followed by passage and rejoining.. In terms of biological role, releases the supercoiling and torsional tension of DNA introduced during the DNA replication and transcription by transiently cleaving and rejoining one strand of the DNA duplex. Introduces a single-strand break via transesterification at a target site in duplex DNA. The scissile phosphodiester is attacked by the catalytic tyrosine of the enzyme, resulting in the formation of a DNA-(3'-phosphotyrosyl)-enzyme intermediate and the expulsion of a 5'-OH DNA strand. The free DNA strand then undergoes passage around the unbroken strand thus removing DNA supercoils. Finally, in the religation step, the DNA 5'-OH attacks the covalent intermediate to expel the active-site tyrosine and restore the DNA phosphodiester backbone. This is DNA topoisomerase 1 from Drosophila melanogaster (Fruit fly).